Consider the following 89-residue polypeptide: Small ribosomal subunit protein uS15 (89 aa).

This sequence belongs to the universal ribosomal protein uS15 family. As to quaternary structure, part of the 30S ribosomal subunit. Forms a bridge to the 50S subunit in the 70S ribosome, contacting the 23S rRNA.

In terms of biological role, one of the primary rRNA binding proteins, it binds directly to 16S rRNA where it helps nucleate assembly of the platform of the 30S subunit by binding and bridging several RNA helices of the 16S rRNA. Functionally, forms an intersubunit bridge (bridge B4) with the 23S rRNA of the 50S subunit in the ribosome. The sequence is that of Small ribosomal subunit protein uS15 from Azotobacter vinelandii (strain DJ / ATCC BAA-1303).